The chain runs to 209 residues: Dephospho-CoA kinase (209 aa).

Residues 13-209 form the DPCK domain; it reads RIGLTGGIAT…AIEKVVVAEN (197 aa). 21 to 26 provides a ligand contact to ATP; it reads ATGKST.

The protein belongs to the CoaE family.

The protein localises to the cytoplasm. It catalyses the reaction 3'-dephospho-CoA + ATP = ADP + CoA + H(+). It functions in the pathway cofactor biosynthesis; coenzyme A biosynthesis; CoA from (R)-pantothenate: step 5/5. Functionally, catalyzes the phosphorylation of the 3'-hydroxyl group of dephosphocoenzyme A to form coenzyme A. In Synechococcus elongatus (strain ATCC 33912 / PCC 7942 / FACHB-805) (Anacystis nidulans R2), this protein is Dephospho-CoA kinase.